A 173-amino-acid polypeptide reads, in one-letter code: Small ribosomal subunit protein mS25 (173 aa).

This sequence belongs to the mitochondrion-specific ribosomal protein mS25 family. As to quaternary structure, component of the mitochondrial ribosome small subunit (28S) which comprises a 12S rRNA and about 30 distinct proteins.

It localises to the mitochondrion. The polypeptide is Small ribosomal subunit protein mS25 (MRPS25) (Bos taurus (Bovine)).